Here is a 56-residue protein sequence, read N- to C-terminus: Alpha-conotoxin Pn1.2 (56 aa).

The first 16 residues, 1–16 (MFTVFLLVVLATTVVS), serve as a signal peptide directing secretion. Residues 17 to 39 (FTSDRASDGGNAAMSDLIALTIK) constitute a propeptide that is removed on maturation. 2 cysteine pairs are disulfide-bonded: cysteine 41-cysteine 47 and cysteine 42-cysteine 55. Residues 43 to 45 (SHP) are ser-Xaa-Pro motif, crucial for potent interaction with nAChR. A Cysteine amide modification is found at cysteine 55.

Belongs to the conotoxin A superfamily. Post-translationally, non-native isomers 'ribbon' (with disulfide connectivity C1-C4; C2-C3) and 'beads' (with disulfide connectivity C1-C2; C3-C4) also inhibit high voltage-activated (HVA) calcium channel currents in rat DRG neurons (20-30% inhibition at 1 uM toxin). In terms of tissue distribution, expressed by the venom duct.

The protein localises to the secreted. In terms of biological role, alpha-conotoxins act on postsynaptic membranes, they bind to the nicotinic acetylcholine receptors (nAChR) and thus inhibit them. This toxin inhibits human alpha-7/CHRNA7 and alpha-9-alpha-10/CHRNA9/CHRNA10 AChR (complete inhibition at 3 uM of toxin). In addition, this toxin inhibits high voltage-activated (HVA) calcium channel currents in rat DRG neurons (22% inhibition at 1 uM toxin) probably by activating GABA(B) receptors (GABBR1 and/or GABBR2). The sequence is that of Alpha-conotoxin Pn1.2 from Conus pennaceus (Feathered cone).